Consider the following 200-residue polypeptide: Dual-action ribosomal maturation protein DarP (200 aa).

Disordered stretches follow at residues 1–25 (MTRK…DRPS) and 177–200 (TASG…DDEA). The segment covering 12-25 (HAAEVDDNGYDRPS) has biased composition (basic and acidic residues). Acidic residues predominate over residues 184-200 (GDDEAADEAGDDHDDEA).

Belongs to the DarP family.

The protein resides in the cytoplasm. Member of a network of 50S ribosomal subunit biogenesis factors which assembles along the 30S-50S interface, preventing incorrect 23S rRNA structures from forming. Promotes peptidyl transferase center (PTC) maturation. The chain is Dual-action ribosomal maturation protein DarP from Burkholderia ambifaria (strain MC40-6).